A 365-amino-acid chain; its full sequence is Spermidine-binding periplasmic protein SpuE (365 aa).

An N-terminal signal peptide occupies residues 1-24; sequence MQHSIGKTLLVAALATAIAGPVQA. The spermidine site is built by Thr-35, Glu-181, Asp-242, and Asn-269.

It belongs to the bacterial solute-binding protein PotD/PotF family.

It is found in the periplasm. In terms of biological role, spermidine-binding protein probably required for its uptake into cells. Binds spermidine with high affinity (KD=14.3 nM). Does not bind putrescine, cadaverine or spermine. Spermidine binding induces large inter-domain conformational changes. Implicated in induction of type 3 secretion systems (T3SS), which play a role in virulence. In Pseudomonas aeruginosa (strain ATCC 15692 / DSM 22644 / CIP 104116 / JCM 14847 / LMG 12228 / 1C / PRS 101 / PAO1), this protein is Spermidine-binding periplasmic protein SpuE (spuE).